Here is a 134-residue protein sequence, read N- to C-terminus: MKPSERRKARRLAVQAIYSWQLSGNNVADVEHEFLTEQELDGVDVAYFRELFAGAATKTAQLDEKLKPLLDRPLEEVSPVEKAILRLAVYELTFRKDVPYKVVINEAIELAKSFGAEDGHKFVNGILDKLVARN.

This sequence belongs to the NusB family.

In terms of biological role, involved in transcription antitermination. Required for transcription of ribosomal RNA (rRNA) genes. Binds specifically to the boxA antiterminator sequence of the ribosomal RNA (rrn) operons. This is Transcription antitermination protein NusB from Shewanella amazonensis (strain ATCC BAA-1098 / SB2B).